The following is a 229-amino-acid chain: Small ribosomal subunit protein uS3c (229 aa).

The KH type-2 domain occupies 39 to 128 (LRDNLFKQYP…RIILTILKVQ (90 aa)).

This sequence belongs to the universal ribosomal protein uS3 family. As to quaternary structure, part of the 30S ribosomal subunit.

It localises to the plastid. It is found in the chloroplast. This is Small ribosomal subunit protein uS3c (rps3) from Tupiella akineta (Green alga).